The primary structure comprises 419 residues: Phosphatidylcholine:ceramide cholinephosphotransferase 1 (419 aa).

The region spanning 13-76 (WSPKKVADWL…LDMIETLKME (64 aa)) is the SAM domain. Serine 14 is subject to Phosphoserine. 5 helical membrane passes run 142-162 (LLAF…ISVV), 190-210 (FSIC…QWLL), 221-241 (FFCI…VTTL), 282-302 (MCGD…YLFI), and 310-330 (LWWY…CILL). Histidine 291 is a catalytic residue. Topologically, residues 331 to 419 (AHDHYTVDVV…VKYSRLVNDT (89 aa)) are cytoplasmic. Residues histidine 334 and aspartate 338 contribute to the active site.

This sequence belongs to the sphingomyelin synthase family.

It is found in the golgi apparatus membrane. The enzyme catalyses an N-acylsphing-4-enine + a 1,2-diacyl-sn-glycero-3-phosphocholine = a sphingomyelin + a 1,2-diacyl-sn-glycerol. The catalysed reaction is 1-(9Z-octadecenoyl)-2-acyl-sn-3-glycerol + a sphingomyelin = a 1-(9Z-octadecenoyl)-2-acyl-sn-glycero-3-phosphocholine + an N-acylsphing-4-enine. It catalyses the reaction N-hexadecanoylsphinganine + a 1,2-diacyl-sn-glycero-3-phosphocholine = N-hexadecanoyl-sphinganine-1-phosphocholine + a 1,2-diacyl-sn-glycerol. It carries out the reaction N-hexadecanoyl-(4R)-hydroxysphinganine + a 1,2-diacyl-sn-glycero-3-phosphocholine = N-hexadecanoyl-(4R)-hydroxysphinganine-phosphocholine + a 1,2-diacyl-sn-glycerol. The enzyme catalyses an N-acylsphing-4-enine + a 1,2-diacyl-sn-glycero-3-phosphoethanolamine = an N-acylsphing-4-enine 1-phosphoethanolamine + a 1,2-diacyl-sn-glycerol. Its pathway is sphingolipid metabolism. Its function is as follows. Major sphingomyelin synthase at the Golgi apparatus. Catalyzes the reversible transfer of phosphocholine moiety in sphingomyelin biosynthesis: in the forward reaction transfers phosphocholine head group of phosphatidylcholine (PC) on to ceramide (CER) to form ceramide phosphocholine (sphingomyelin, SM) and diacylglycerol (DAG) as by-product, and in the reverse reaction transfers phosphocholine from SM to DAG to form PC and CER. The direction of the reaction depends on the levels of CER and DAG in Golgi membranes. Converts the newly synthesized CER, that is transported from the endoplasmic reticulum to the trans-Golgi by the Cer transport protein (CERT), to SM. Can form a heteromeric complex with glucosylceramide synthase (GCS) increasing SMS activity and reducing glucosylceramide synthesis, a critical mechanism that controls the metabolic fate of CER in the Golgi. Does not use free phosphorylcholine or CDP-choline as donor. Can also transfer phosphoethanolamine head group of phosphatidylethanolamine (PE) on to CER to form ceramide phosphoethanolamine (CPE). Regulates receptor-mediated signal transduction via mitogenic DAG and proapoptotic CER, as well as via SM, a structural component of membrane rafts that serve as platforms for signal transduction and protein sorting. Plays a role in secretory transport via regulation of DAG pool at the Golgi apparatus and its downstream effects on PRKD1. This Rattus norvegicus (Rat) protein is Phosphatidylcholine:ceramide cholinephosphotransferase 1 (Sgms1).